The primary structure comprises 175 residues: Cytochrome c homolog (175 aa).

The Cytoplasmic segment spans residues 1 to 8 (MSGKELNK). A helical; Signal-anchor transmembrane segment spans residues 9–29 (IVAAILFASLIAMMVGFVANI). At 30 to 175 (LYKPTLELQH…LFLKTYVHDK (146 aa)) the chain is on the periplasmic side. Heme c is bound by residues Cys-84, Cys-87, His-88, and Met-150.

The protein belongs to the cytochrome c family. Post-translationally, binds 1 heme c group covalently per subunit.

It is found in the cell membrane. May be involved in electron transfer from bc1 complex to aa3. This chain is Cytochrome c homolog (cycM), found in Rickettsia felis (strain ATCC VR-1525 / URRWXCal2) (Rickettsia azadi).